We begin with the raw amino-acid sequence, 659 residues long: Centrosomal protein of 76 kDa (659 aa).

Phosphoserine is present on residues Ser-75 and Ser-83.

It belongs to the CEP76 family. In terms of assembly, interacts with CCP110 and CEP97.

The protein localises to the cytoplasm. The protein resides in the cytoskeleton. Its subcellular location is the microtubule organizing center. It localises to the centrosome. It is found in the centriole. Centrosomal protein involved in regulation of centriole duplication. Required to limit centriole duplication to once per cell cycle by preventing centriole reduplication. This Homo sapiens (Human) protein is Centrosomal protein of 76 kDa (CEP76).